We begin with the raw amino-acid sequence, 352 residues long: Fe-S cluster assembly protein DRE2 (352 aa).

The span at 1 to 11 shows a compositional bias: polar residues; it reads MAPTAVYTQKD. Residues 1–24 are disordered; that stretch reads MAPTAVYTQKDSPSSSQPSSKGPA. The interval 1 to 196 is N-terminal SAM-like domain; it reads MAPTAVYTQK…TVTSAPSVPL (196 aa). Positions 196 to 237 are linker; that stretch reads LLLRKRGDPAKKKALWALTTDASASPSTKIDADALLTAEDKA. Positions 243, 257, 260, and 262 each coordinate [2Fe-2S] cluster. Residues 243–262 form a fe-S binding site A region; the sequence is CAPVDRSAPRRKKACKNCSC. [4Fe-4S] cluster is bound by residues Cys-315, Cys-318, Cys-326, and Cys-329. Short sequence motifs (cx2C motif) lie at residues 315–318 and 326–329; these read CGSC and CAGC. A fe-S binding site B region spans residues 315 to 329; that stretch reads CGSCFLGDAFRCAGC.

It belongs to the anamorsin family. As to quaternary structure, monomer. Interacts with TAH18. Interacts with MIA40. It depends on [2Fe-2S] cluster as a cofactor. The cofactor is [4Fe-4S] cluster.

It is found in the cytoplasm. Its subcellular location is the mitochondrion intermembrane space. Functionally, component of the cytosolic iron-sulfur (Fe-S) protein assembly (CIA) machinery required for the maturation of extramitochondrial Fe-S proteins. Part of an electron transfer chain functioning in an early step of cytosolic Fe-S biogenesis, facilitating the de novo assembly of a [4Fe-4S] cluster on the scaffold complex CFD1-NBP35. Electrons are transferred to DRE2 from NADPH via the FAD- and FMN-containing protein TAH18. TAH18-DRE2 are also required for the assembly of the diferric tyrosyl radical cofactor of ribonucleotide reductase (RNR), probably by providing electrons for reduction during radical cofactor maturation in the catalytic small subunit RNR2. This Coprinopsis cinerea (strain Okayama-7 / 130 / ATCC MYA-4618 / FGSC 9003) (Inky cap fungus) protein is Fe-S cluster assembly protein DRE2.